Consider the following 430-residue polypeptide: Adenylosuccinate synthetase (430 aa).

GTP-binding positions include 11–17 (GDEGKGK) and 39–41 (GHS). Residue aspartate 12 is the Proton acceptor of the active site. Aspartate 12 and glycine 39 together coordinate Mg(2+). IMP is bound by residues 12-15 (DEGK), 37-40 (NAGH), threonine 129, arginine 143, asparagine 221, threonine 236, and arginine 300. The active-site Proton donor is histidine 40. 296–302 (VSTGRKR) is a substrate binding site. Residues arginine 302, 328–330 (KLD), and 412–414 (GTG) contribute to the GTP site.

The protein belongs to the adenylosuccinate synthetase family. Homodimer. It depends on Mg(2+) as a cofactor.

It is found in the cytoplasm. The catalysed reaction is IMP + L-aspartate + GTP = N(6)-(1,2-dicarboxyethyl)-AMP + GDP + phosphate + 2 H(+). It participates in purine metabolism; AMP biosynthesis via de novo pathway; AMP from IMP: step 1/2. Plays an important role in the de novo pathway and in the salvage pathway of purine nucleotide biosynthesis. Catalyzes the first committed step in the biosynthesis of AMP from IMP. This is Adenylosuccinate synthetase from Neurospora crassa (strain ATCC 24698 / 74-OR23-1A / CBS 708.71 / DSM 1257 / FGSC 987).